Consider the following 295-residue polypeptide: Release factor glutamine methyltransferase (295 aa).

Residues G127 to G131, D150, F179, and N195 each bind S-adenosyl-L-methionine. Residue N195–Y198 participates in substrate binding.

The protein belongs to the protein N5-glutamine methyltransferase family. PrmC subfamily.

It carries out the reaction L-glutaminyl-[peptide chain release factor] + S-adenosyl-L-methionine = N(5)-methyl-L-glutaminyl-[peptide chain release factor] + S-adenosyl-L-homocysteine + H(+). Its function is as follows. Methylates the class 1 translation termination release factors RF1/PrfA and RF2/PrfB on the glutamine residue of the universally conserved GGQ motif. The sequence is that of Release factor glutamine methyltransferase from Nitratidesulfovibrio vulgaris (strain ATCC 29579 / DSM 644 / CCUG 34227 / NCIMB 8303 / VKM B-1760 / Hildenborough) (Desulfovibrio vulgaris).